The sequence spans 259 residues: Beta-glucanase (259 aa).

The signal sequence occupies residues 1–31 (MVKSKYLVFISVFSLLFGVFVVGFSHQGVKA). The 221-residue stretch at 35–255 (RPMGTAFYES…WVRYTPLQNY (221 aa)) folds into the GH16 domain. Catalysis depends on Glu-142, which acts as the Nucleophile. Glu-146 acts as the Proton donor in catalysis.

Belongs to the glycosyl hydrolase 16 family.

It carries out the reaction Hydrolysis of (1-&gt;4)-beta-D-glucosidic linkages in beta-D-glucans containing (1-&gt;3)- and (1-&gt;4)-bonds.. Hydrolyzes B-glucans containing mixed beta-1,3 and beta-1,4 linkages. The protein is Beta-glucanase (bglBB) of Brevibacillus brevis (Bacillus brevis).